An 859-amino-acid polypeptide reads, in one-letter code: Tripartite terminase subunit 1 (859 aa).

The C3H1-type zinc finger occupies 231–259 (CCICLDELSVTANQGDTIYKRLGYSVCDH). A compositionally biased stretch (basic and acidic residues) spans 512-525 (TRPRADKAGGRAED). Residues 512 to 542 (TRPRADKAGGRAEDGAGDCDDEGYPGAADAT) are disordered. 782–789 (FESIFQCG) is an ATP binding site.

It belongs to the herpesviridae TRM1 protein family. As to quaternary structure, associates with TRM2 and TRM3 to form the tripartite terminase complex. Interacts with portal protein.

It localises to the host nucleus. Functionally, component of the molecular motor that translocates viral genomic DNA in empty capsid during DNA packaging. Forms a tripartite terminase complex together with TRM2 and TRM3 in the host cytoplasm. Once the complex reaches the host nucleus, it interacts with the capsid portal vertex. This portal forms a ring in which genomic DNA is translocated into the capsid. TRM1 carries an endonuclease activity that plays an important role for the cleavage of concatemeric viral DNA into unit length genomes. The sequence is that of Tripartite terminase subunit 1 from Amazona oratrix (yellow-headed parrot).